A 243-amino-acid chain; its full sequence is Transcription factor TCP6 (243 aa).

The tract at residues 1-55 is disordered; it reads MVMEPKKNQNLPSFLNPSRQNQDNDKKRKQTEVKGFDIVVGEKRKKKENEEEDQE. A compositionally biased stretch (polar residues) spans 8-21; that stretch reads NQNLPSFLNPSRQN. Basic and acidic residues predominate over residues 22-35; the sequence is QDNDKKRKQTEVKG. A coiled-coil region spans residues 42–66; sequence EKRKKKENEEEDQEIQILYEKEKKK. The TCP domain maps to 68-122; the sequence is NKDRHLKVEGRGRRVRLPPLCAARIYQLTKELGHKSDGETLEWLLQHAEPSILSA.

Interacts with SPL.

It localises to the nucleus. This Arabidopsis thaliana (Mouse-ear cress) protein is Transcription factor TCP6 (TCP6).